Here is a 248-residue protein sequence, read N- to C-terminus: 4-hydroxy-tetrahydrodipicolinate reductase (248 aa).

Residues 74–76 and 99–102 each bind NAD(+); these read GTT and SANF. His134 serves as the catalytic Proton donor/acceptor. His135 provides a ligand contact to (S)-2,3,4,5-tetrahydrodipicolinate. Catalysis depends on Lys138, which acts as the Proton donor. 144–145 contacts (S)-2,3,4,5-tetrahydrodipicolinate; the sequence is GT.

The protein belongs to the DapB family.

It localises to the cytoplasm. The catalysed reaction is (S)-2,3,4,5-tetrahydrodipicolinate + NAD(+) + H2O = (2S,4S)-4-hydroxy-2,3,4,5-tetrahydrodipicolinate + NADH + H(+). It carries out the reaction (S)-2,3,4,5-tetrahydrodipicolinate + NADP(+) + H2O = (2S,4S)-4-hydroxy-2,3,4,5-tetrahydrodipicolinate + NADPH + H(+). It functions in the pathway amino-acid biosynthesis; L-lysine biosynthesis via DAP pathway; (S)-tetrahydrodipicolinate from L-aspartate: step 4/4. Its function is as follows. Catalyzes the conversion of 4-hydroxy-tetrahydrodipicolinate (HTPA) to tetrahydrodipicolinate. The polypeptide is 4-hydroxy-tetrahydrodipicolinate reductase (Chlorobium phaeobacteroides (strain DSM 266 / SMG 266 / 2430)).